Reading from the N-terminus, the 644-residue chain is Threonine--tRNA ligase (644 aa).

The 62-residue stretch at methionine 1–threonine 62 folds into the TGS domain. The tract at residues aspartate 240 to proline 538 is catalytic. Zn(2+)-binding residues include cysteine 334, histidine 385, and histidine 515.

This sequence belongs to the class-II aminoacyl-tRNA synthetase family. Homodimer. It depends on Zn(2+) as a cofactor.

The protein resides in the cytoplasm. It catalyses the reaction tRNA(Thr) + L-threonine + ATP = L-threonyl-tRNA(Thr) + AMP + diphosphate + H(+). Its function is as follows. Catalyzes the attachment of threonine to tRNA(Thr) in a two-step reaction: L-threonine is first activated by ATP to form Thr-AMP and then transferred to the acceptor end of tRNA(Thr). Also edits incorrectly charged L-seryl-tRNA(Thr). This is Threonine--tRNA ligase from Lactobacillus acidophilus (strain ATCC 700396 / NCK56 / N2 / NCFM).